A 237-amino-acid chain; its full sequence is uncharacterized protein (237 aa).

The signal sequence occupies residues 1–28; sequence MNRPLLSVAGSLFVAAWALYIFSCFQHG. The disordered stretch occupies residues 52-96; the sequence is NARDTAAHPSDTADNTSGSSTTTDPRSHGNAPPAPVGGAAQTHTQ. Positions 63 to 75 are enriched in polar residues; sequence TADNTSGSSTTTD.

This is an uncharacterized protein from Treponema pallidum (strain Nichols).